The primary structure comprises 228 residues: Ion-translocating oxidoreductase complex subunit G (228 aa).

Residues 35 to 55 (ALSLGLVCALVAVALLLGNQL) form a helical membrane-spanning segment. At T197 the chain carries FMN phosphoryl threonine.

Belongs to the RnfG family. As to quaternary structure, the complex is composed of six subunits: RnfA, RnfB, RnfC, RnfD, RnfE and RnfG. FMN serves as cofactor.

The protein resides in the cell inner membrane. In terms of biological role, part of a membrane-bound complex that couples electron transfer with translocation of ions across the membrane. The chain is Ion-translocating oxidoreductase complex subunit G from Stutzerimonas stutzeri (Pseudomonas stutzeri).